The primary structure comprises 545 residues: Chaperonin GroEL 1 (545 aa).

Residues Thr-29 to Pro-32, Asp-86 to Thr-90, Gly-413, Asp-479 to Ala-481, and Asp-495 each bind ATP. A disordered region spans residues Pro-525–Tyr-545. A compositionally biased stretch (gly residues) spans Ser-535 to Tyr-545.

Belongs to the chaperonin (HSP60) family. In terms of assembly, forms a cylinder of 14 subunits composed of two heptameric rings stacked back-to-back. Interacts with the co-chaperonin GroES.

It is found in the cytoplasm. It catalyses the reaction ATP + H2O + a folded polypeptide = ADP + phosphate + an unfolded polypeptide.. In terms of biological role, together with its co-chaperonin GroES, plays an essential role in assisting protein folding. The GroEL-GroES system forms a nano-cage that allows encapsulation of the non-native substrate proteins and provides a physical environment optimized to promote and accelerate protein folding. This is Chaperonin GroEL 1 from Thermosynechococcus vestitus (strain NIES-2133 / IAM M-273 / BP-1).